Here is a 699-residue protein sequence, read N- to C-terminus: Elongation factor G (699 aa).

The tr-type G domain maps to 8 to 283 (EHIRNIGICA…AVVDFLPSPI (276 aa)). Residues 17 to 24 (AHIDAGKT), 81 to 85 (DTPGH), and 135 to 138 (NKMD) contribute to the GTP site.

Belongs to the TRAFAC class translation factor GTPase superfamily. Classic translation factor GTPase family. EF-G/EF-2 subfamily.

The protein localises to the cytoplasm. Functionally, catalyzes the GTP-dependent ribosomal translocation step during translation elongation. During this step, the ribosome changes from the pre-translocational (PRE) to the post-translocational (POST) state as the newly formed A-site-bound peptidyl-tRNA and P-site-bound deacylated tRNA move to the P and E sites, respectively. Catalyzes the coordinated movement of the two tRNA molecules, the mRNA and conformational changes in the ribosome. This is Elongation factor G from Rickettsia conorii (strain ATCC VR-613 / Malish 7).